Reading from the N-terminus, the 83-residue chain is Putative protein T-ENOL (83 aa).

Residues 1–33 (MASTPMGNEGEKKSSWPSQAAPSLRGGPASLSR) form a disordered region.

This is Putative protein T-ENOL from Homo sapiens (Human).